A 508-amino-acid polypeptide reads, in one-letter code: MDHLGASLWPQVGSLCLLLAGAAWAPPPNLPDPKFESKAALLAARGPEELLCFTERLEDLVCFWEEAASAGVGPGNYSFSYQLEDEPWKLCRLHQAPTARGAVRFWCSLPTADTSSFVPLELRVTAASGAPRYHRVIHINEVVLLDAPVGLVARLADESGHVVLRWLPPPETPMTSHIRYEVDVSAGNGAGSVQRVEILEGRTECVLSNLRGRTRYTFAVRARMAEPSFGGFWSAWSEPVSLLTPSDLDPLILTLSLILVVILVLLTVLALLSHRRALKQKIWPGIPSPESEFEGLFTTHKGNFQLWLYQNDGCLWWSPCTPFTEDPPASLEVLSERCWGTMQAVEPGTDDEGPLLEPVGSEHAQDTYLVLDKWLLPRNPPSEDLPGPGGSVDIVAMDEGSEASSCSSALASKPSPEGASAASFEYTILDPSSQLLRPWTLCPELPPTPPHLKYLYLVVSDSGISTDYSSGDSQGAQGGLSDGPYSNPYENSLIPAAEPLPPSYVACS.

Positions 1 to 24 (MDHLGASLWPQVGSLCLLLAGAAW) are cleaved as a signal peptide. Topologically, residues 25–250 (APPPNLPDPK…SLLTPSDLDP (226 aa)) are extracellular. Residues C52 and C62 are joined by a disulfide bond. N76 carries an N-linked (GlcNAc...) asparagine glycan. C91 and C107 form a disulfide bridge. The region spanning 147 to 247 (APVGLVARLA…EPVSLLTPSD (101 aa)) is the Fibronectin type-III domain. The WSXWS motif motif lies at 233-237 (WSAWS). The chain crosses the membrane as a helical span at residues 251–273 (LILTLSLILVVILVLLTVLALLS). The Cytoplasmic portion of the chain corresponds to 274 to 508 (HRRALKQKIW…PLPPSYVACS (235 aa)). A Glycyl lysine isopeptide (Lys-Gly) (interchain with G-Cter in ubiquitin) cross-link involves residue K281. A Box 1 motif motif is present at residues 282 to 290 (IWPGIPSPE). 2 positions are modified to phosphotyrosine; by JAK2: Y368 and Y426. Residues 452–457 (LKYLYL) carry the ITIM motif motif. K453 is covalently cross-linked (Glycyl lysine isopeptide (Lys-Gly) (interchain with G-Cter in ubiquitin)). Phosphotyrosine; by JAK2 is present on residues Y454, Y456, Y468, Y485, Y489, and Y504. The interval 454–456 (YLY) is required for high-affinity SOCS3 binding. The segment at 467–494 (DYSSGDSQGAQGGLSDGPYSNPYENSLI) is disordered.

Belongs to the type I cytokine receptor family. Type 1 subfamily. As to quaternary structure, forms homodimers on EPO stimulation. The tyrosine-phosphorylated form interacts with several SH2 domain-containing proteins including LYN, the adapter protein SH2B2, PTPN6, PTPN11, JAK2, PI3 kinases, STAT5A/B, SOCS3, CRKL. Interacts with INPP5D/SHIP1. SH2B2 binding inhibits the JAK-STAT signaling. Interacts with RHEX; this interaction occurs in a erythropoietin (EPO)-dependent manner. Interacts with ATXN2L. On EPO stimulation, phosphorylated on C-terminal tyrosine residues by JAK2. The phosphotyrosine motifs are also recruitment sites for several SH2-containing proteins and adapter proteins which mediate cell proliferation. Phosphorylation on Tyr-454 is required for PTPN6 interaction, Tyr-426 for PTPN11. Tyr-426 is also required for SOCS3 binding, but Tyr-454/Tyr-456 motif is the preferred binding site. Post-translationally, ubiquitinated by the ECS(SOCS2) complex following ligand-binding and phosphorylation by JAK2, leading to its degradation by the proteasome. Regulation by the ECS(SOCS2) complex acts as a negative feedback loop of erythropoietin-mediated signaling pathway. Ubiquitination at Lys-281 mediates receptor internalization, whereas ubiquitination at Lys-453 promotes trafficking of activated receptors to the lysosomes for degradation. Ubiquitinated by NOSIP; appears to be either multi-monoubiquitinated or polyubiquitinated. Ubiquitination mediates proliferation and survival of EPO-dependent cells. Erythroid cells and erythroid progenitor cells. In terms of tissue distribution, isoform EPOR-F is the most abundant form in EPO-dependent erythroleukemia cells and in late-stage erythroid progenitors. As to expression, isoform EPOR-S and isoform EPOR-T are the predominant forms in bone marrow. Isoform EPOR-S and isoform EPOR-T are the predominant forms in bone marrow. Isoform EPOR-T is the most abundant from in early-stage erythroid progenitor cells.

It localises to the cell membrane. The protein resides in the secreted. Its function is as follows. Receptor for erythropoietin, which mediates erythropoietin-induced erythroblast proliferation and differentiation. Upon EPO stimulation, EPOR dimerizes triggering the JAK2/STAT5 signaling cascade. In some cell types, can also activate STAT1 and STAT3. May also activate the LYN tyrosine kinase. In terms of biological role, acts as a dominant-negative receptor of EPOR-mediated signaling. The chain is Erythropoietin receptor from Homo sapiens (Human).